The chain runs to 158 residues: Transcription elongation factor GreA (158 aa).

The stretch at 45 to 72 (AEYHAAREQQSFIEGRIKQLEGELSHAE) forms a coiled coil.

It belongs to the GreA/GreB family.

Functionally, necessary for efficient RNA polymerase transcription elongation past template-encoded arresting sites. The arresting sites in DNA have the property of trapping a certain fraction of elongating RNA polymerases that pass through, resulting in locked ternary complexes. Cleavage of the nascent transcript by cleavage factors such as GreA or GreB allows the resumption of elongation from the new 3'terminus. GreA releases sequences of 2 to 3 nucleotides. In Xylella fastidiosa (strain M12), this protein is Transcription elongation factor GreA.